The sequence spans 135 residues: Ribosome-binding factor A (135 aa).

A disordered region spans residues 115–135; that stretch reads VNEDKRKQQDSGREEDQAGEE. Residues 116–135 are compositionally biased toward basic and acidic residues; the sequence is NEDKRKQQDSGREEDQAGEE.

It belongs to the RbfA family. As to quaternary structure, monomer. Binds 30S ribosomal subunits, but not 50S ribosomal subunits or 70S ribosomes.

Its subcellular location is the cytoplasm. In terms of biological role, one of several proteins that assist in the late maturation steps of the functional core of the 30S ribosomal subunit. Associates with free 30S ribosomal subunits (but not with 30S subunits that are part of 70S ribosomes or polysomes). Required for efficient processing of 16S rRNA. May interact with the 5'-terminal helix region of 16S rRNA. The protein is Ribosome-binding factor A of Vibrio campbellii (strain ATCC BAA-1116).